The sequence spans 456 residues: Chaperone protein dnaJ GFA2, mitochondrial (456 aa).

The transit peptide at 1 to 89 (MVPSNGAKVL…RSFHGTGSSF (89 aa)) directs the protein to the mitochondrion. Residues 94 to 159 (DYYSVLGVSK…EKRDLYDQVG (66 aa)) form the J domain. A CR-type zinc finger spans residues 225–303 (GCSKTVTFQT…CRGARVVRGQ (79 aa)). Zn(2+)-binding residues include cysteine 238, cysteine 241, cysteine 255, cysteine 258, cysteine 277, cysteine 280, cysteine 291, and cysteine 294. 4 CXXCXGXG motif repeats span residues 238–245 (CNTCGGQG), 255–262 (CKACNGSG), 277–284 (CQKCGGAG), and 291–298 (CKSCRGAR).

The protein belongs to the DnaJ family. As to expression, widely expressed.

The protein resides in the mitochondrion. In terms of biological role, chaperone that may play a role in mitochondrial protein folding. Involved in female gametophyte development. Required for cell death of the synergid cells during fertilization process, and fusion of the polar nuclei during megagametogenesis. In Arabidopsis thaliana (Mouse-ear cress), this protein is Chaperone protein dnaJ GFA2, mitochondrial.